The following is a 185-amino-acid chain: Elongation factor P (185 aa).

It belongs to the elongation factor P family.

It localises to the cytoplasm. Its pathway is protein biosynthesis; polypeptide chain elongation. Functionally, involved in peptide bond synthesis. Stimulates efficient translation and peptide-bond synthesis on native or reconstituted 70S ribosomes in vitro. Probably functions indirectly by altering the affinity of the ribosome for aminoacyl-tRNA, thus increasing their reactivity as acceptors for peptidyl transferase. The chain is Elongation factor P from Clostridioides difficile (strain 630) (Peptoclostridium difficile).